The sequence spans 366 residues: Inactive PGL/p-HBAD biosynthesis glycosyltransferase Mb2982c (366 aa).

Disordered regions lie at residues 1-23 and 295-366; these read MEET…PNAA and DGDR…HGGP. A compositionally biased stretch (basic and acidic residues) spans 295–311; that stretch reads DGDRGHRWPEPPEERAG.

This sequence belongs to the UDP-glycosyltransferase family.

The sequence is that of Inactive PGL/p-HBAD biosynthesis glycosyltransferase Mb2982c from Mycobacterium bovis (strain ATCC BAA-935 / AF2122/97).